We begin with the raw amino-acid sequence, 1393 residues long: DNA-directed RNA polymerase subunit beta'' (1393 aa).

C220, C291, C298, and C301 together coordinate Zn(2+).

Belongs to the RNA polymerase beta' chain family. RpoC2 subfamily. In plastids the minimal PEP RNA polymerase catalytic core is composed of four subunits: alpha, beta, beta', and beta''. When a (nuclear-encoded) sigma factor is associated with the core the holoenzyme is formed, which can initiate transcription. The cofactor is Zn(2+).

The protein localises to the plastid. It is found in the chloroplast. It catalyses the reaction RNA(n) + a ribonucleoside 5'-triphosphate = RNA(n+1) + diphosphate. Functionally, DNA-dependent RNA polymerase catalyzes the transcription of DNA into RNA using the four ribonucleoside triphosphates as substrates. In Gossypium hirsutum (Upland cotton), this protein is DNA-directed RNA polymerase subunit beta''.